Consider the following 324-residue polypeptide: Serine racemase (324 aa).

Residues Ser32, Lys51, and Thr52 each coordinate ATP. Lys56 functions as the Proton acceptor in the catalytic mechanism. N6-(pyridoxal phosphate)lysine is present on Lys56. A Ca(2+)-binding site is contributed by Thr78. The active-site Proton acceptor is Ser81. Pyridoxal 5'-phosphate is bound at residue Asn83. Residues Gln86 and Tyr118 each coordinate ATP. Asp175 lines the Mg(2+) pocket. Residues Gly182, Gly183, Gly184, and Gly185 each contribute to the pyridoxal 5'-phosphate site. 3 residues coordinate Ca(2+): Glu207, Ala211, and Asp213. Mg(2+) contacts are provided by Glu207, Ala211, and Asp213. Residues Glu207, Ala211, and Asp213 each contribute to the Mn(2+) site. Lys277 lines the ATP pocket. Residue Ser310 coordinates pyridoxal 5'-phosphate. Asn313 is an ATP binding site.

Belongs to the serine/threonine dehydratase family. Homodimer. It depends on Mg(2+) as a cofactor. Mn(2+) is required as a cofactor. Ca(2+) serves as cofactor. The cofactor is pyridoxal 5'-phosphate.

It catalyses the reaction L-serine = D-serine. The enzyme catalyses L-serine = pyruvate + NH4(+). The catalysed reaction is D-serine = pyruvate + NH4(+). Functionally, catalyzes the synthesis of D-serine from L-serine. Has dehydratase activity towards both L-serine and D-serine. The polypeptide is Serine racemase (srr) (Dictyostelium discoideum (Social amoeba)).